The following is a 122-amino-acid chain: Small ribosomal subunit protein uS13 (122 aa).

The interval 99-122 is disordered; sequence RGQRTHTNARTRKGPAKAIAGKKK.

The protein belongs to the universal ribosomal protein uS13 family. As to quaternary structure, part of the 30S ribosomal subunit. Forms a loose heterodimer with protein S19. Forms two bridges to the 50S subunit in the 70S ribosome.

In terms of biological role, located at the top of the head of the 30S subunit, it contacts several helices of the 16S rRNA. In the 70S ribosome it contacts the 23S rRNA (bridge B1a) and protein L5 of the 50S subunit (bridge B1b), connecting the 2 subunits; these bridges are implicated in subunit movement. Contacts the tRNAs in the A and P-sites. This Rhizobium etli (strain CIAT 652) protein is Small ribosomal subunit protein uS13.